Reading from the N-terminus, the 208-residue chain is Small ribosomal subunit protein uS4 (208 aa).

Residues 98 to 161 (RRLDNVIYRM…KELEIIKESL (64 aa)) enclose the S4 RNA-binding domain.

Belongs to the universal ribosomal protein uS4 family. Part of the 30S ribosomal subunit. Contacts protein S5. The interaction surface between S4 and S5 is involved in control of translational fidelity.

In terms of biological role, one of the primary rRNA binding proteins, it binds directly to 16S rRNA where it nucleates assembly of the body of the 30S subunit. Its function is as follows. With S5 and S12 plays an important role in translational accuracy. The polypeptide is Small ribosomal subunit protein uS4 (Thermodesulfovibrio yellowstonii (strain ATCC 51303 / DSM 11347 / YP87)).